A 345-amino-acid chain; its full sequence is Myb/SANT-like DNA-binding domain-containing protein 4 (345 aa).

Residues 4-77 enclose the Myb-like domain; that stretch reads LKRKRKSNFS…EVKRRYLDWR (74 aa). Lys-9 is covalently cross-linked (Glycyl lysine isopeptide (Lys-Gly) (interchain with G-Cter in SUMO2)). At Ser-106 the chain carries Phosphoserine. Glycyl lysine isopeptide (Lys-Gly) (interchain with G-Cter in SUMO2) cross-links involve residues Lys-114 and Lys-142. The segment at 139-175 is disordered; it reads TEVKVEEEERDPQSPEFEIEEEEEMLSSVIPDSRREN. Thr-188 is modified (phosphothreonine). Residues 202-344 are a coiled coil; the sequence is HLLMNIEKQK…RLRIQKEGHL (143 aa). Residues Lys-237, Lys-254, and Lys-273 each participate in a glycyl lysine isopeptide (Lys-Gly) (interchain with G-Cter in SUMO2) cross-link.

This chain is Myb/SANT-like DNA-binding domain-containing protein 4 (Msantd4), found in Mus musculus (Mouse).